The following is a 726-amino-acid chain: Catalase-peroxidase (726 aa).

Positions 1-33 are disordered; it reads MSTTDDTHNTLSTGKCPFHQGGHDRSAGAGTAS. Residues 105–226 constitute a cross-link (tryptophyl-tyrosyl-methioninium (Trp-Tyr) (with M-252)); the sequence is WHGAGTYRSI…LGATEMGLIY (122 aa). Residue histidine 106 is the Proton acceptor of the active site. The segment at residues 226–252 is a cross-link (tryptophyl-tyrosyl-methioninium (Tyr-Met) (with W-105)); it reads YVNPEGPDHSGEPLSAAAAIRATFGNM. Histidine 267 contributes to the heme b binding site.

It belongs to the peroxidase family. Peroxidase/catalase subfamily. As to quaternary structure, homodimer or homotetramer. Heme b is required as a cofactor. In terms of processing, formation of the three residue Trp-Tyr-Met cross-link is important for the catalase, but not the peroxidase activity of the enzyme.

It catalyses the reaction H2O2 + AH2 = A + 2 H2O. The enzyme catalyses 2 H2O2 = O2 + 2 H2O. In terms of biological role, bifunctional enzyme with both catalase and broad-spectrum peroxidase activity. In Salmonella paratyphi A (strain ATCC 9150 / SARB42), this protein is Catalase-peroxidase.